Here is a 777-residue protein sequence, read N- to C-terminus: Intraflagellar transport protein 80 homolog (777 aa).

7 WD repeats span residues 12–50 (KHQE…TSLI), 104–143 (AHCG…RSTL), 145–185 (QQGT…LQWK), 186–225 (AHDG…LYGS), 227–265 (PHEH…YALE), 267–306 (PNTG…WEWK), and 504–542 (KLGT…YVDR).

As to quaternary structure, component of the IFT complex B, at least composed of IFT20, IFT22, IFT25, IFT27, IFT46, IFT52, TRAF3IP1/IFT54, IFT57, IFT74, IFT80, IFT81, and IFT88. Interacts with IFT88. Interacts with IFT57 and IFT70B.

The protein resides in the cytoplasm. The protein localises to the cytoskeleton. It is found in the cilium basal body. Its subcellular location is the cilium axoneme. Functionally, component of the intraflagellar transport (IFT) complex B, which is essential for the development and maintenance of motile and sensory cilia. The protein is Intraflagellar transport protein 80 homolog (Ift80) of Mus musculus (Mouse).